The chain runs to 348 residues: Phosphate acyltransferase (348 aa).

This sequence belongs to the PlsX family. As to quaternary structure, homodimer. Probably interacts with PlsY.

It localises to the cytoplasm. The enzyme catalyses a fatty acyl-[ACP] + phosphate = an acyl phosphate + holo-[ACP]. It participates in lipid metabolism; phospholipid metabolism. Its function is as follows. Catalyzes the reversible formation of acyl-phosphate (acyl-PO(4)) from acyl-[acyl-carrier-protein] (acyl-ACP). This enzyme utilizes acyl-ACP as fatty acyl donor, but not acyl-CoA. This Francisella tularensis subsp. tularensis (strain FSC 198) protein is Phosphate acyltransferase.